The primary structure comprises 1464 residues: Gag-Pol polyprotein (1464 aa).

A lipid anchor (N-myristoyl glycine; by host) is attached at G2. Positions 7-31 (VLRGKKADELERIRLRPGGKKKYRL) are interaction with Gp41. Positions 16–22 (LERIRLR) match the Nuclear export signal motif. Residues 26-32 (KKKYRLK) carry the Nuclear localization signal motif. The disordered stretch occupies residues 111 to 136 (ETGTAEKMPSTSRPTAPSSEKGGNYP). Positions 119 to 128 (PSTSRPTAPS) are enriched in polar residues. Y135 is modified (phosphotyrosine; by host). The tract at residues 191–228 (NCVGDHQAAMQIIREIINEEAAEWDVQHPIPGPLPAGQ) is interaction with human PPIA/CYPA and NUP153. The segment at 279–365 (YNPTNILDIK…GGPGQKARLM (87 aa)) is dimerization/Multimerization of capsid protein p24. CCHC-type zinc fingers lie at residues 389–406 (FKCW…QCRA) and 410–427 (QGCW…NCPD). The disordered stretch occupies residues 432-500 (FLRTGPLGKE…RGLTAPRAGG (69 aa)). Low complexity predominate over residues 456 to 469 (TNSTPSGSSSGSTG). The span at 473–485 (AAREKTERAERET) shows a compositional bias: basic and acidic residues. Residues 514 to 518 (PQFSL) form a dimerization of protease region. A Peptidase A2 domain is found at 533–602 (VEVLLDTGAD…TPINIFGRNI (70 aa)). D538 (for protease activity; shared with dimeric partner) is an active-site residue. Dimerization of protease stretches follow at residues 562–568 (GIGGFIN) and 601–613 (NILT…LNLP). In terms of domain architecture, Reverse transcriptase spans 656-846 (EGQLEEAPPT…PPYHWMGYEL (191 aa)). D722, D797, and D798 together coordinate Mg(2+). Residues 839–847 (YHWMGYELW) form an RT 'primer grip' region. A Tryptophan repeat motif motif is present at residues 1009–1025 (WEQWWDNYWQVTWIPDW). The RNase H type-1 domain occupies 1045–1168 (IPGAETFYTD…VDHLVSQGIR (124 aa)). The Mg(2+) site is built by D1054, E1089, D1109, and D1160. An Integrase-type zinc finger spans residues 1174–1215 (EKIEPAQEEHEKYHSNVKELSHKFGIPNLVARQIVNSCAQCQ). Positions 1183, 1187, 1211, and 1214 each coordinate Zn(2+). One can recognise an Integrase catalytic domain in the interval 1224 to 1375 (QVNAELGTWQ…TPSERLINMI (152 aa)). Positions 1235, 1287, and 1323 each coordinate Mg(2+). The integrase-type DNA-binding region spans 1394–1441 (FRVYFREGRDQLWKGPGELLWKGEGAVLVKVGTDIKIIPRRKAKIIRD).

As to quaternary structure, homotrimer; further assembles as hexamers of trimers. Interacts with gp41 (via C-terminus). Interacts with host CALM1; this interaction induces a conformational change in the Matrix protein, triggering exposure of the myristate group. Interacts with host AP3D1; this interaction allows the polyprotein trafficking to multivesicular bodies during virus assembly. Part of the pre-integration complex (PIC) which is composed of viral genome, matrix protein, Vpr and integrase. In terms of assembly, homodimer; the homodimer further multimerizes as homohexamers or homopentamers. Interacts with human PPIA/CYPA. Interacts with human NUP153. Interacts with host PDZD8; this interaction stabilizes the capsid. Interacts with monkey TRIM5; this interaction destabilizes the capsid. Homodimer, whose active site consists of two apposed aspartic acid residues. As to quaternary structure, heterodimer of p66 RT and p51 RT (RT p66/p51). Heterodimerization of RT is essential for DNA polymerase activity. The overall folding of the subdomains is similar in p66 RT and p51 RT but the spatial arrangements of the subdomains are dramatically different. In terms of assembly, homotetramer; may further associate as a homohexadecamer. Part of the pre-integration complex (PIC) which is composed of viral genome, matrix protein, Vpr and integrase. Interacts with human SMARCB1/INI1 and human PSIP1/LEDGF isoform 1. Interacts with human KPNA3; this interaction might play a role in nuclear import of the pre-integration complex. Interacts with human NUP153; this interaction might play a role in nuclear import of the pre-integration complex. The cofactor is Mg(2+). In terms of processing, specific enzymatic cleavages by the viral protease yield mature proteins. The protease is released by autocatalytic cleavage. The polyprotein is cleaved during and after budding, this process is termed maturation. Proteolytic cleavage of p66 RT removes the RNase H domain to yield the p51 RT subunit. Nucleocapsid protein p7 might be further cleaved after virus entry.

Its subcellular location is the host cell membrane. The protein resides in the host endosome. The protein localises to the host multivesicular body. It is found in the virion membrane. It localises to the host nucleus. Its subcellular location is the host cytoplasm. The protein resides in the virion. It catalyses the reaction Endopeptidase for which the P1 residue is preferably hydrophobic.. The catalysed reaction is Endohydrolysis of RNA in RNA/DNA hybrids. Three different cleavage modes: 1. sequence-specific internal cleavage of RNA. Human immunodeficiency virus type 1 and Moloney murine leukemia virus enzymes prefer to cleave the RNA strand one nucleotide away from the RNA-DNA junction. 2. RNA 5'-end directed cleavage 13-19 nucleotides from the RNA end. 3. DNA 3'-end directed cleavage 15-20 nucleotides away from the primer terminus.. The enzyme catalyses 3'-end directed exonucleolytic cleavage of viral RNA-DNA hybrid.. It carries out the reaction DNA(n) + a 2'-deoxyribonucleoside 5'-triphosphate = DNA(n+1) + diphosphate. With respect to regulation, protease: The viral protease is inhibited by many synthetic protease inhibitors (PIs), such as amprenavir, atazanavir, indinavir, loprinavir, nelfinavir, ritonavir and saquinavir. Use of protease inhibitors in tritherapy regimens permit more ambitious therapeutic strategies. Reverse transcriptase/ribonuclease H: RT can be inhibited either by nucleoside RT inhibitors (NRTIs) or by non nucleoside RT inhibitors (NNRTIs). NRTIs act as chain terminators, whereas NNRTIs inhibit DNA polymerization by binding a small hydrophobic pocket near the RT active site and inducing an allosteric change in this region. Classical NRTIs are abacavir, adefovir (PMEA), didanosine (ddI), lamivudine (3TC), stavudine (d4T), tenofovir (PMPA), zalcitabine (ddC), and zidovudine (AZT). Classical NNRTIs are atevirdine (BHAP U-87201E), delavirdine, efavirenz (DMP-266), emivirine (I-EBU), and nevirapine (BI-RG-587). The tritherapies used as a basic effective treatment of AIDS associate two NRTIs and one NNRTI. Its function is as follows. Mediates, with Gag polyprotein, the essential events in virion assembly, including binding the plasma membrane, making the protein-protein interactions necessary to create spherical particles, recruiting the viral Env proteins, and packaging the genomic RNA via direct interactions with the RNA packaging sequence (Psi). Gag-Pol polyprotein may regulate its own translation, by the binding genomic RNA in the 5'-UTR. At low concentration, the polyprotein would promote translation, whereas at high concentration, the polyprotein would encapsidate genomic RNA and then shut off translation. In terms of biological role, targets the polyprotein to the plasma membrane via a multipartite membrane-binding signal, that includes its myristoylated N-terminus. Matrix protein is part of the pre-integration complex. Implicated in the release from host cell mediated by Vpu. Binds to RNA. Functionally, forms the conical core that encapsulates the genomic RNA-nucleocapsid complex in the virion. Most core are conical, with only 7% tubular. The core is constituted by capsid protein hexamer subunits. The core is disassembled soon after virion entry. Host restriction factors such as TRIM5-alpha or TRIMCyp bind retroviral capsids and cause premature capsid disassembly, leading to blocks in reverse transcription. Capsid restriction by TRIM5 is one of the factors which restricts HIV-1 to the human species. Host PIN1 apparently facilitates the virion uncoating. On the other hand, interactions with PDZD8 or CYPA stabilize the capsid. Encapsulates and protects viral dimeric unspliced genomic RNA (gRNA). Binds these RNAs through its zinc fingers. Acts as a nucleic acid chaperone which is involved in rearangement of nucleic acid secondary structure during gRNA retrotranscription. Also facilitates template switch leading to recombination. As part of the polyprotein, participates in gRNA dimerization, packaging, tRNA incorporation and virion assembly. Its function is as follows. Aspartyl protease that mediates proteolytic cleavages of Gag and Gag-Pol polyproteins during or shortly after the release of the virion from the plasma membrane. Cleavages take place as an ordered, step-wise cascade to yield mature proteins. This process is called maturation. Displays maximal activity during the budding process just prior to particle release from the cell. Also cleaves Nef and Vif, probably concomitantly with viral structural proteins on maturation of virus particles. Hydrolyzes host EIF4GI and PABP1 in order to shut off the capped cellular mRNA translation. The resulting inhibition of cellular protein synthesis serves to ensure maximal viral gene expression and to evade host immune response. In terms of biological role, multifunctional enzyme that converts the viral RNA genome into dsDNA in the cytoplasm, shortly after virus entry into the cell. This enzyme displays a DNA polymerase activity that can copy either DNA or RNA templates, and a ribonuclease H (RNase H) activity that cleaves the RNA strand of RNA-DNA heteroduplexes in a partially processive 3' to 5' endonucleasic mode. Conversion of viral genomic RNA into dsDNA requires many steps. A tRNA(3)-Lys binds to the primer-binding site (PBS) situated at the 5'-end of the viral RNA. RT uses the 3' end of the tRNA primer to perform a short round of RNA-dependent minus-strand DNA synthesis. The reading proceeds through the U5 region and ends after the repeated (R) region which is present at both ends of viral RNA. The portion of the RNA-DNA heteroduplex is digested by the RNase H, resulting in a ssDNA product attached to the tRNA primer. This ssDNA/tRNA hybridizes with the identical R region situated at the 3' end of viral RNA. This template exchange, known as minus-strand DNA strong stop transfer, can be either intra- or intermolecular. RT uses the 3' end of this newly synthesized short ssDNA to perform the RNA-dependent minus-strand DNA synthesis of the whole template. RNase H digests the RNA template except for two polypurine tracts (PPTs) situated at the 5'-end and near the center of the genome. It is not clear if both polymerase and RNase H activities are simultaneous. RNase H probably can proceed both in a polymerase-dependent (RNA cut into small fragments by the same RT performing DNA synthesis) and a polymerase-independent mode (cleavage of remaining RNA fragments by free RTs). Secondly, RT performs DNA-directed plus-strand DNA synthesis using the PPTs that have not been removed by RNase H as primers. PPTs and tRNA primers are then removed by RNase H. The 3' and 5' ssDNA PBS regions hybridize to form a circular dsDNA intermediate. Strand displacement synthesis by RT to the PBS and PPT ends produces a blunt ended, linear dsDNA copy of the viral genome that includes long terminal repeats (LTRs) at both ends. Functionally, catalyzes viral DNA integration into the host chromosome, by performing a series of DNA cutting and joining reactions. This enzyme activity takes place after virion entry into a cell and reverse transcription of the RNA genome in dsDNA. The first step in the integration process is 3' processing. This step requires a complex comprising the viral genome, matrix protein, Vpr and integrase. This complex is called the pre-integration complex (PIC). The integrase protein removes 2 nucleotides from each 3' end of the viral DNA, leaving recessed CA OH's at the 3' ends. In the second step, the PIC enters cell nucleus. This process is mediated through integrase and Vpr proteins, and allows the virus to infect a non dividing cell. This ability to enter the nucleus is specific of lentiviruses, other retroviruses cannot and rely on cell division to access cell chromosomes. In the third step, termed strand transfer, the integrase protein joins the previously processed 3' ends to the 5' ends of strands of target cellular DNA at the site of integration. The 5'-ends are produced by integrase-catalyzed staggered cuts, 5 bp apart. A Y-shaped, gapped, recombination intermediate results, with the 5'-ends of the viral DNA strands and the 3' ends of target DNA strands remaining unjoined, flanking a gap of 5 bp. The last step is viral DNA integration into host chromosome. This involves host DNA repair synthesis in which the 5 bp gaps between the unjoined strands are filled in and then ligated. Since this process occurs at both cuts flanking the HIV genome, a 5 bp duplication of host DNA is produced at the ends of HIV-1 integration. Alternatively, Integrase may catalyze the excision of viral DNA just after strand transfer, this is termed disintegration. The sequence is that of Gag-Pol polyprotein (gag-pol) from Homo sapiens (Human).